We begin with the raw amino-acid sequence, 286 residues long: Interferon-induced 35 kDa protein homolog (286 aa).

Residues 5–26 (LQTVLYSLQEEQARLKMRLQEL) form a leucine-zipper region. 2 NID domains span residues 81–170 (ALVT…GDVE) and 183–266 (FADE…GEVE).

It belongs to the NMI family. As to quaternary structure, homodimer. Also interacts with B-ATF. Interacts with TRIM21. Interacts (via NID domains) with NMI (via NID domains); the interaction is direct and is facilitated by TRIM21. Phosphorylated. Dephosphorylation correlates with the formation of a complex with NMI.

The protein localises to the cytoplasm. It localises to the nucleus. The protein resides in the secreted. In terms of biological role, acts as a signaling pathway regulator involved in innate immune system response. In response to interferon IFN-alpha, associates in a complex with transcriptional regulator NMI to regulate immune response; the complex formation prevents proteasome-mediated degradation of IFI35 and correlates with IFI35 dephosphorylation. In complex with NMI, inhibits virus-triggered type I interferon/IFN-beta production. In complex with NMI, negatively regulates nuclear factor NF-kappa-B signaling by inhibiting the nuclear translocation, activation and transcription of the NF-kappa-B subunit p65/RELA, resulting in the inhibition of endothelial cell proliferation, migration and re-endothelialization of injured arteries. Beside its role as an intracellular signaling pathway regulator, also functions extracellularly as damage-associated molecular patterns (DAMPs) to promote inflammation when actively released by macrophage to the extracellular space during cell injury and pathogen invasion. Macrophage-secreted IFI35 activates NF-kappa-B signaling in adjacent macrophages through Toll-like receptor 4/TLR4 activation, thereby inducing NF-kappa-B translocation from the cytoplasm into the nucleus which promotes the release of pro-inflammatory cytokines. The sequence is that of Interferon-induced 35 kDa protein homolog from Mus musculus (Mouse).